A 333-amino-acid polypeptide reads, in one-letter code: Ribosomal RNA small subunit methyltransferase H (333 aa).

S-adenosyl-L-methionine-binding positions include 36–38 (GGY), D54, F81, D102, and Q109.

The protein belongs to the methyltransferase superfamily. RsmH family.

Its subcellular location is the cytoplasm. It catalyses the reaction cytidine(1402) in 16S rRNA + S-adenosyl-L-methionine = N(4)-methylcytidine(1402) in 16S rRNA + S-adenosyl-L-homocysteine + H(+). Functionally, specifically methylates the N4 position of cytidine in position 1402 (C1402) of 16S rRNA. This is Ribosomal RNA small subunit methyltransferase H from Afipia carboxidovorans (strain ATCC 49405 / DSM 1227 / KCTC 32145 / OM5) (Oligotropha carboxidovorans).